Here is a 215-residue protein sequence, read N- to C-terminus: Probable transaldolase (215 aa).

Residue lysine 83 is the Schiff-base intermediate with substrate of the active site.

Belongs to the transaldolase family. Type 3B subfamily.

The protein localises to the cytoplasm. It carries out the reaction D-sedoheptulose 7-phosphate + D-glyceraldehyde 3-phosphate = D-erythrose 4-phosphate + beta-D-fructose 6-phosphate. It participates in carbohydrate degradation; pentose phosphate pathway; D-glyceraldehyde 3-phosphate and beta-D-fructose 6-phosphate from D-ribose 5-phosphate and D-xylulose 5-phosphate (non-oxidative stage): step 2/3. In terms of biological role, transaldolase is important for the balance of metabolites in the pentose-phosphate pathway. This is Probable transaldolase from Clostridium kluyveri (strain NBRC 12016).